Here is a 388-residue protein sequence, read N- to C-terminus: Coproporphyrin III ferrochelatase (388 aa).

Ser59 and Tyr124 together coordinate Fe-coproporphyrin III. Positions 186 and 276 each coordinate Fe(2+). The segment at 349–369 (QSPQHASRAVTDAAATGRRGD) is disordered.

This sequence belongs to the ferrochelatase family.

It localises to the cytoplasm. It carries out the reaction Fe-coproporphyrin III + 2 H(+) = coproporphyrin III + Fe(2+). Its pathway is porphyrin-containing compound metabolism; protoheme biosynthesis. Involved in coproporphyrin-dependent heme b biosynthesis. Catalyzes the insertion of ferrous iron into coproporphyrin III to form Fe-coproporphyrin III. This Frankia alni (strain DSM 45986 / CECT 9034 / ACN14a) protein is Coproporphyrin III ferrochelatase.